A 377-amino-acid chain; its full sequence is Adaptive-response sensory kinase SasA (377 aa).

The Histidine kinase domain occupies 154-373 (MLVHDLRSPL…SFHFTLPVYR (220 aa)). The residue at position 157 (histidine 157) is a Phosphohistidine; by autocatalysis.

Homooligomerizes. Interacts with KaiC. Participates in the KaiABC clock complex, whose core is composed of a KaiC homohexamer, 6 KaiB and up to 6 KaiA dimers. SasA and KaiB(fs) compete to bind to KaiC.

The enzyme catalyses ATP + protein L-histidine = ADP + protein N-phospho-L-histidine.. Its function is as follows. Member of the two-component regulatory system SasA/RpaA involved in genome-wide circadian gene expression. One of several clock output pathways. Participates in the Kai clock protein complex, the main circadian regulator in cyanobacteria, via its interaction with KaiC. KaiC enhances the autophosphorylation activity of SasA, which then transfers its phosphate group to RpaA to activate it. In addition to its output function, recruits fold-shifted KaiB (KaiB(fs)) to KaiC to cooperatively form the KaiB(6):KaiC(6) complex (independent of SasA kinase activity). Required for robustness of the circadian rhythm of gene expression and is involved in clock output, also required for adaptation to light/dark cycles. The sequence is that of Adaptive-response sensory kinase SasA from Synechococcus sp. (strain JA-3-3Ab) (Cyanobacteria bacterium Yellowstone A-Prime).